The sequence spans 493 residues: Cell division protein FtsA (493 aa).

Positions 434-468 (AHQSNPTPHIHSSPTERNLSDLKTPSAPLNTAKND) are disordered. Residues 436 to 465 (QSNPTPHIHSSPTERNLSDLKTPSAPLNTA) are compositionally biased toward polar residues.

Belongs to the FtsA/MreB family. In terms of assembly, self-interacts. Interacts with FtsZ.

The protein localises to the cell inner membrane. In terms of biological role, cell division protein that is involved in the assembly of the Z ring. May serve as a membrane anchor for the Z ring. The chain is Cell division protein FtsA from Helicobacter pylori (strain J99 / ATCC 700824) (Campylobacter pylori J99).